Consider the following 245-residue polypeptide: Probable phosphatase YcdX (245 aa).

Zn(2+) contacts are provided by H7, H9, H15, H40, E73, H101, H131, D192, and H194.

The protein belongs to the PHP family. Homotrimer. Requires Zn(2+) as cofactor.

In Shigella dysenteriae serotype 1 (strain Sd197), this protein is Probable phosphatase YcdX.